We begin with the raw amino-acid sequence, 733 residues long: DNA-binding protein SATB2 (733 aa).

The segment at Met1 to Pro47 is disordered. Ser20 carries the post-translational modification Phosphoserine. Residues Lys24 and Lys30 each participate in a glycyl lysine isopeptide (Lys-Gly) (interchain with G-Cter in SUMO2) cross-link. Ser39 carries the post-translational modification Phosphoserine. The 102-residue stretch at Gly57–Ser158 folds into the CMP domain. A Glycyl lysine isopeptide (Lys-Gly) (interchain with G-Cter in SUMO2) cross-link involves residue Lys161. One can recognise a CUTL domain in the interval Lys161–Val234. Lys233 is covalently cross-linked (Glycyl lysine isopeptide (Lys-Gly) (interchain with G-Cter in SUMO)). Residue Lys350 forms a Glycyl lysine isopeptide (Lys-Gly) (interchain with G-Cter in SUMO); alternate linkage. Residue Lys350 forms a Glycyl lysine isopeptide (Lys-Gly) (interchain with G-Cter in SUMO2); alternate linkage. The segment at residues Lys350 to Arg437 is a DNA-binding region (CUT 1). A disordered region spans residues Asp435 to Pro473. Low complexity predominate over residues Met441–Ser458. The residue at position 454 (Ser454) is a Phosphoserine. Over residues Arg459–Thr470 the composition is skewed to polar residues. Thr467 carries the phosphothreonine modification. Residues Pro473–Ser560 constitute a DNA-binding region (CUT 2). A Glycyl lysine isopeptide (Lys-Gly) (interchain with G-Cter in SUMO2) cross-link involves residue Lys475. Residues Gln580–Ser593 show a composition bias toward low complexity. Disordered regions lie at residues Gln580 to Ser617 and Leu694 to Arg733. Position 594 is a phosphoserine (Ser594). Residues Pro615–Gly674 constitute a DNA-binding region (homeobox). Positions Leu694–Glu708 are enriched in acidic residues. Basic and acidic residues predominate over residues Glu709–Arg733. Lys724 participates in a covalent cross-link: Glycyl lysine isopeptide (Lys-Gly) (interchain with G-Cter in SUMO2).

Belongs to the CUT homeobox family. In terms of assembly, interacts with ATF4 and RUNX2; resulting in enhanced DNA binding and transactivation by these transcription factors. Interacts with PIAS1. In terms of processing, sumoylated by PIAS1. Sumoylation promotes nuclear localization, but represses transcription factor activity. High expression in adult brain, moderate expression in fetal brain, and weak expression in adult liver, kidney, and spinal cord and in select brain regions, including amygdala, corpus callosum, caudate nucleus, and hippocampus.

Its subcellular location is the nucleus matrix. Binds to DNA, at nuclear matrix- or scaffold-associated regions. Thought to recognize the sugar-phosphate structure of double-stranded DNA. Transcription factor controlling nuclear gene expression, by binding to matrix attachment regions (MARs) of DNA and inducing a local chromatin-loop remodeling. Acts as a docking site for several chromatin remodeling enzymes and also by recruiting corepressors (HDACs) or coactivators (HATs) directly to promoters and enhancers. Required for the initiation of the upper-layer neurons (UL1) specific genetic program and for the inactivation of deep-layer neurons (DL) and UL2 specific genes, probably by modulating BCL11B expression. Repressor of Ctip2 and regulatory determinant of corticocortical connections in the developing cerebral cortex. May play an important role in palate formation. Acts as a molecular node in a transcriptional network regulating skeletal development and osteoblast differentiation. This Homo sapiens (Human) protein is DNA-binding protein SATB2 (SATB2).